Consider the following 271-residue polypeptide: Hydroxyethylthiazole kinase (271 aa).

Residue methionine 46 participates in substrate binding. ATP-binding residues include arginine 122 and threonine 169. Glycine 196 lines the substrate pocket.

It belongs to the Thz kinase family. Mg(2+) serves as cofactor.

It carries out the reaction 5-(2-hydroxyethyl)-4-methylthiazole + ATP = 4-methyl-5-(2-phosphooxyethyl)-thiazole + ADP + H(+). It participates in cofactor biosynthesis; thiamine diphosphate biosynthesis; 4-methyl-5-(2-phosphoethyl)-thiazole from 5-(2-hydroxyethyl)-4-methylthiazole: step 1/1. Functionally, catalyzes the phosphorylation of the hydroxyl group of 4-methyl-5-beta-hydroxyethylthiazole (THZ). In Alkaliphilus oremlandii (strain OhILAs) (Clostridium oremlandii (strain OhILAs)), this protein is Hydroxyethylthiazole kinase.